The primary structure comprises 156 residues: Transcription antitermination protein NusB (156 aa).

Belongs to the NusB family.

Its function is as follows. Involved in transcription antitermination. Required for transcription of ribosomal RNA (rRNA) genes. Binds specifically to the boxA antiterminator sequence of the ribosomal RNA (rrn) operons. The protein is Transcription antitermination protein NusB of Rickettsia conorii (strain ATCC VR-613 / Malish 7).